The following is a 411-amino-acid chain: Corticotropin-releasing factor receptor 2 (411 aa).

Residues 1 to 19 (MDAALLLSLLEANCSLALA) constitute a signal peptide (not cleaved). Topologically, residues 1-108 (MDAALLLSLL…EPILDDKQRK (108 aa)) are extracellular. Residues asparagine 13, asparagine 41, asparagine 74, asparagine 86, and asparagine 94 are each glycosylated (N-linked (GlcNAc...) asparagine). Intrachain disulfides connect cysteine 14-cysteine 50, cysteine 40-cysteine 83, and cysteine 64-cysteine 98. The chain crosses the membrane as a helical span at residues 109-139 (YDLHYRIALIINYLGHCVSVVALVAAFLLFL). Residues 140 to 146 (VLRSIRC) are Cytoplasmic-facing. A helical transmembrane segment spans residues 147–171 (LRNVIHWNLITTFILRNITWFLLQL). Residues 172-185 (IDHEVHEGNEVWCR) lie on the Extracellular side of the membrane. Cysteine 184 and cysteine 254 form a disulfide bridge. Residues 186-214 (CVTTIFNYFVVTNFFWMFVEGCYLHTAIV) form a helical membrane-spanning segment. Residues 215 to 221 (MTYSTEH) lie on the Cytoplasmic side of the membrane. The chain crosses the membrane as a helical span at residues 222-249 (LRKWLFLFIGWCIPCPIIVAWAVGKLYY). The Extracellular portion of the chain corresponds to 250–265 (ENEQCWFGKEPGDLVD). A helical transmembrane segment spans residues 266–291 (YIYQGPIILVLLINFVFLFNIVRILM). Residues 292 to 302 (TKLRASTTSET) lie on the Cytoplasmic side of the membrane. A helical transmembrane segment spans residues 303 to 327 (IQYRKAVKATLVLLPLLGITYMLFF). At 328 to 334 (VNPGEDD) the chain is on the extracellular side. The chain crosses the membrane as a helical span at residues 335–364 (LSQIVFIYFNSFLQSFQGFFVSVFYCFFNG). Residues 365–411 (EVRSALRKRWHRWQDHHALRVPVARAMSIPTSPTRISFHSIKQTAAV) lie on the Cytoplasmic side of the membrane.

This sequence belongs to the G-protein coupled receptor 2 family. In terms of assembly, monomer. Interacts (via N-terminal extracellular domain) with CRF, UCN, UCN2 and UCN3. Post-translationally, a N-glycosylation site within the signal peptide impedes its proper cleavage and function. In terms of tissue distribution, predominantly expressed in limbic regions of the brain such as the lateral septum, the entorhinal cortex, the hypothalamic ventromedial nucleus and several amygdaloid nuclei. Also detectable in lung, kidney and heart.

The protein resides in the cell membrane. Functionally, G-protein coupled receptor for CRH (corticotropin-releasing factor), UCN (urocortin), UCN2 and UCN3. Has high affinity for UCN. Ligand binding causes a conformation change that triggers signaling via guanine nucleotide-binding proteins (G proteins) and down-stream effectors, such as adenylate cyclase. Promotes the activation of adenylate cyclase, leading to increased intracellular cAMP levels. This is Corticotropin-releasing factor receptor 2 (Crhr2) from Rattus norvegicus (Rat).